The primary structure comprises 78 residues: Small ribosomal subunit protein bS18 (78 aa).

It belongs to the bacterial ribosomal protein bS18 family. Part of the 30S ribosomal subunit. Forms a tight heterodimer with protein bS6.

Its function is as follows. Binds as a heterodimer with protein bS6 to the central domain of the 16S rRNA, where it helps stabilize the platform of the 30S subunit. The protein is Small ribosomal subunit protein bS18 of Parafrankia sp. (strain EAN1pec).